Reading from the N-terminus, the 287-residue chain is 4-hydroxybenzoate octaprenyltransferase (287 aa).

6 helical membrane-spanning segments follow: residues 41 to 61 (WPLL…GCAM), 89 to 109 (WEAI…ILPL), 133 to 153 (FFAI…PMAF), 158 to 178 (DTVP…SVAY), 202 to 224 (FGRF…YVWI), and 267 to 287 (NNWL…LAGS).

This sequence belongs to the UbiA prenyltransferase family. The cofactor is Mg(2+).

It localises to the cell inner membrane. The enzyme catalyses all-trans-octaprenyl diphosphate + 4-hydroxybenzoate = 4-hydroxy-3-(all-trans-octaprenyl)benzoate + diphosphate. Its pathway is cofactor biosynthesis; ubiquinone biosynthesis. Catalyzes the prenylation of para-hydroxybenzoate (PHB) with an all-trans polyprenyl group. Mediates the second step in the final reaction sequence of ubiquinone-8 (UQ-8) biosynthesis, which is the condensation of the polyisoprenoid side chain with PHB, generating the first membrane-bound Q intermediate 3-octaprenyl-4-hydroxybenzoate. This is 4-hydroxybenzoate octaprenyltransferase from Burkholderia lata (strain ATCC 17760 / DSM 23089 / LMG 22485 / NCIMB 9086 / R18194 / 383).